We begin with the raw amino-acid sequence, 191 residues long: Large ribosomal subunit protein eL6 (191 aa).

It belongs to the eukaryotic ribosomal protein eL6 family.

This is Large ribosomal subunit protein eL6 (RPL6) from Tetrahymena thermophila (strain SB210).